The sequence spans 478 residues: Probable cyclin-dependent kinase 9 (478 aa).

Positions 1-17 are enriched in polar residues; the sequence is MSAQNYHAGLHQSSTQR. The tract at residues 1 to 55 is disordered; the sequence is MSAQNYHAGLHQSSTQRPPKRPNTEHAQEPPKRALIGGQTTPSSSGGGQTPNGTN. Residues 22–32 are compositionally biased toward basic and acidic residues; sequence PNTEHAQEPPK. The Protein kinase domain maps to 85-413; that stretch reads YEKLNKIGQG…SDEAEDDIWF (329 aa). ATP is bound by residues 91–99 and K114; that span reads IGQGTFGEV. D217 (proton acceptor) is an active-site residue. The tract at residues 444–478 is disordered; the sequence is HANRGRHQNAQQRPNQQQARPSNAIPAGQYRDTIF. Positions 451-464 are enriched in low complexity; sequence QNAQQRPNQQQARP.

It belongs to the protein kinase superfamily. CMGC Ser/Thr protein kinase family. CDC2/CDKX subfamily. As to quaternary structure, associates with cyclin-T (cit-1.1 or cit-1.2) to form P-TEFb.

The protein localises to the nucleus. It carries out the reaction L-seryl-[protein] + ATP = O-phospho-L-seryl-[protein] + ADP + H(+). It catalyses the reaction L-threonyl-[protein] + ATP = O-phospho-L-threonyl-[protein] + ADP + H(+). The enzyme catalyses [DNA-directed RNA polymerase] + ATP = phospho-[DNA-directed RNA polymerase] + ADP + H(+). Functionally, essential member of the cyclin-dependent kinase pair (CDK9/cyclin-T) complex, also called positive transcription elongation factor B (P-TEFb), which is proposed to facilitate the transition from abortive to production elongation by phosphorylating the CTD (C-terminal domain) of the large subunit of RNA polymerase II (RNAP II) and spt-5. This is Probable cyclin-dependent kinase 9 (cdk-9) from Caenorhabditis elegans.